We begin with the raw amino-acid sequence, 208 residues long: MNNLQEQLIALGGVFQAAVLVDRIARTGQASEANIGCMLGSLLVRDPKDTLEVFGGDDLNLRDGYRALVGALERDPSSLQREPLRYALSMLGLERQLNKRGDMLDIIGNRLPQIQSQADHFGLVHENVIASSGALYQDTLSTLRQRIQVHGDMRFLQQASNASKIRALLLAGIRAARLWRQLGGHRWQLVFSRRKLLKELYGMMRTTD.

This sequence belongs to the HflD family.

It localises to the cytoplasm. The protein resides in the cell inner membrane. The polypeptide is High frequency lysogenization protein HflD homolog (Pseudomonas entomophila (strain L48)).